We begin with the raw amino-acid sequence, 589 residues long: MTRLSSSFFFTLREAPAEAVAVSHKLLLRAGFIRPLAGTAGLYAYGPLMQRVLQKVGRIVREEMDATGAQEALFCQLQPAEIWKESGRWTVYTQDGTMFTLKDGQGEQAREYGLGPTHEEAVCDFVRASLNSYKQLPFHLYQVQTKFRNEKRPRFGLMRGREFIMKDGYSFHATPESLDETYRAMYRAYTNMFRRCGLDFRAVEADSGAIGGSGSHEFMALCDIGEDTILYCDAAGYAANVEKAVSLVSDPEAIGPGSYAVKSTPGIRTVEQQAAMLGVPISRIVKNIVYVALYAEADPRPVLVSIRGDRHINETKLKNRLDCLDVRLADEAELAAWVEVKPGFVGPDAPIAGVIRLADRSVDGLTDFSTGCNQDDVQCVWANWGENGLVLPEVADLDTAQAGDHCHLAPEATLQSARGVELGHIFKLGTKYSRPMQVLFADEAGELQPALMGCYGVGVSRLPAAVVEQSHDNDGILWPIAIAPYQVVLVPANVAVEAQRQAAEELYRSLTAAGIDTLLDDRPERAGVKFKDADLIGIPLRVTLGRDLEAGLVEIKVRGGGAAEKVPLAEALAQIKGLIERLNSAQHSR.

Belongs to the class-II aminoacyl-tRNA synthetase family. ProS type 1 subfamily. As to quaternary structure, homodimer.

The protein resides in the cytoplasm. The catalysed reaction is tRNA(Pro) + L-proline + ATP = L-prolyl-tRNA(Pro) + AMP + diphosphate. Functionally, catalyzes the attachment of proline to tRNA(Pro) in a two-step reaction: proline is first activated by ATP to form Pro-AMP and then transferred to the acceptor end of tRNA(Pro). As ProRS can inadvertently accommodate and process non-cognate amino acids such as alanine and cysteine, to avoid such errors it has two additional distinct editing activities against alanine. One activity is designated as 'pretransfer' editing and involves the tRNA(Pro)-independent hydrolysis of activated Ala-AMP. The other activity is designated 'posttransfer' editing and involves deacylation of mischarged Ala-tRNA(Pro). The misacylated Cys-tRNA(Pro) is not edited by ProRS. The polypeptide is Proline--tRNA ligase (Gloeobacter violaceus (strain ATCC 29082 / PCC 7421)).